The primary structure comprises 66 residues: Prokaryotic ubiquitin-like protein UBact (66 aa).

Residues methionine 1–glutamate 66 are disordered. Basic and acidic residues predominate over residues glycine 30–glutamate 66. An Isoglutamyl lysine isopeptide (Glu-Lys) (interchain with K-? in acceptor proteins) cross-link involves residue glutamate 66.

The protein belongs to the ubiquitin-like protein UBact family.

May function as a protein modifier covalently attached to lysine residues of substrate proteins. This may serve to target the modified proteins for degradation by proteasomes. This chain is Prokaryotic ubiquitin-like protein UBact, found in Nitrospira moscoviensis.